Consider the following 110-residue polypeptide: Phosphoribosyl-ATP pyrophosphatase (110 aa).

This sequence belongs to the PRA-PH family.

Its subcellular location is the cytoplasm. The enzyme catalyses 1-(5-phospho-beta-D-ribosyl)-ATP + H2O = 1-(5-phospho-beta-D-ribosyl)-5'-AMP + diphosphate + H(+). It functions in the pathway amino-acid biosynthesis; L-histidine biosynthesis; L-histidine from 5-phospho-alpha-D-ribose 1-diphosphate: step 2/9. This Pseudomonas fluorescens (strain Pf0-1) protein is Phosphoribosyl-ATP pyrophosphatase.